A 75-amino-acid chain; its full sequence is Conotoxin Vt15.1 (75 aa).

Positions 1-19 (MMPVILPLLLSLAIRGGDG) are cleaved as a signal peptide. Residues 20 to 43 (QAIQGDRDLIAKLFKRYQEHGLSV) constitute a propeptide that is removed on maturation. Position 73 is a tryptophan amide (Trp-73).

The protein belongs to the conotoxin V superfamily. Contains 4 disulfide bonds. In terms of tissue distribution, expressed by the venom duct.

Its subcellular location is the secreted. The protein is Conotoxin Vt15.1 of Conus planorbis (Planorbis cone).